Reading from the N-terminus, the 1368-residue chain is Beclin-1-like protein A (1368 aa).

Low complexity-rich tracts occupy residues 24 to 57 and 122 to 135; these read GSGS…NNGP and NSII…SPSN. Disordered regions lie at residues 24-64, 122-249, 331-431, 819-874, and 992-1048; these read GSGS…PSSE, NSII…SLMM, NKNN…STNS, TITP…NNNN, and IDGN…NDNN. Over residues 136-147 the composition is skewed to polar residues; the sequence is AITRNNSFNMDP. A compositionally biased stretch (low complexity) spans 148 to 167; that stretch reads NNNNNNNNNNNNNNNNNNNN. Residues 168–177 show a composition bias toward polar residues; that stretch reads GEYMNSSIVF. The segment covering 179 to 246 has biased composition (low complexity); sequence NNVNNNNNNP…INNSVNSVNS (68 aa). Low complexity-rich tracts occupy residues 992–1005 and 1015–1048; these read IDGN…NDNN and NNNN…NDNN. Residues 1047-1150 are a coiled coil; sequence NNYNFENEIN…AIRDQLERVS (104 aa).

Belongs to the beclin family.

The protein resides in the endosome membrane. Involved in autophagy. May be required to recruit the atg8-phosphatidylinositol conjugate and the atg12-atg5 conjugate to the pre-autophagosomal structure. Required for normal survival when exposed to pathogenic bacteria S.typhimurium by promoting autophagic degradation of intracellular S.typhimurium. In Dictyostelium discoideum (Social amoeba), this protein is Beclin-1-like protein A (atg6A).